The chain runs to 88 residues: Putative membrane protein insertion efficiency factor (88 aa).

The disordered stretch occupies residues 68 to 88; that stretch reads VPPKKDKNADSEHSCKVHHHH. Residues 69–82 are compositionally biased toward basic and acidic residues; that stretch reads PPKKDKNADSEHSC.

It belongs to the UPF0161 family.

It is found in the cell membrane. Functionally, could be involved in insertion of integral membrane proteins into the membrane. The protein is Putative membrane protein insertion efficiency factor of Listeria monocytogenes serovar 1/2a (strain ATCC BAA-679 / EGD-e).